The following is a 708-amino-acid chain: Polyribonucleotide nucleotidyltransferase (708 aa).

Mg(2+) contacts are provided by Asp-488 and Asp-494. In terms of domain architecture, KH spans Pro-555–Ile-615. The S1 motif domain occupies Gly-625 to Val-692.

It belongs to the polyribonucleotide nucleotidyltransferase family. Mg(2+) is required as a cofactor.

The protein resides in the cytoplasm. The enzyme catalyses RNA(n+1) + phosphate = RNA(n) + a ribonucleoside 5'-diphosphate. In terms of biological role, involved in mRNA degradation. Catalyzes the phosphorolysis of single-stranded polyribonucleotides processively in the 3'- to 5'-direction. The protein is Polyribonucleotide nucleotidyltransferase of Thermotoga petrophila (strain ATCC BAA-488 / DSM 13995 / JCM 10881 / RKU-1).